Reading from the N-terminus, the 171-residue chain is Spiderine-2a (171 aa).

A signal peptide spans Met1–Ala18. A propeptide spans Thr19 to Arg58 (removed in mature form). A linear cationic cytotoxin domain region spans residues Lys59–Leu104. The Oxytoxin-type inhibitor cystine knot (ICK) domain maps to Asn118 to Glu171. 5 disulfides stabilise this stretch: Cys121–Cys135, Cys128–Cys140, Cys132–Cys167, Cys134–Cys156, and Cys142–Cys154.

In terms of processing, disulfide bonds. As to expression, expressed by the venom gland.

It is found in the secreted. In terms of biological role, has antimicrobial, insecticidal, cytolytic and cytotoxic activity. In Oxyopes takobius (Lynx spider), this protein is Spiderine-2a.